We begin with the raw amino-acid sequence, 411 residues long: Imidazolonepropionase (411 aa).

2 residues coordinate Fe(3+): His78 and His80. 2 residues coordinate Zn(2+): His78 and His80. 4-imidazolone-5-propanoate-binding residues include Arg87, Tyr150, and His183. Position 150 (Tyr150) interacts with N-formimidoyl-L-glutamate. His248 lines the Fe(3+) pocket. Residue His248 coordinates Zn(2+). Residue Gln251 coordinates 4-imidazolone-5-propanoate. Fe(3+) is bound at residue Asp322. Residue Asp322 coordinates Zn(2+). N-formimidoyl-L-glutamate contacts are provided by Asn324 and Gly326. A 4-imidazolone-5-propanoate-binding site is contributed by Ser327.

The protein belongs to the metallo-dependent hydrolases superfamily. HutI family. Zn(2+) serves as cofactor. Fe(3+) is required as a cofactor.

It is found in the cytoplasm. The catalysed reaction is 4-imidazolone-5-propanoate + H2O = N-formimidoyl-L-glutamate. It participates in amino-acid degradation; L-histidine degradation into L-glutamate; N-formimidoyl-L-glutamate from L-histidine: step 3/3. Catalyzes the hydrolytic cleavage of the carbon-nitrogen bond in imidazolone-5-propanoate to yield N-formimidoyl-L-glutamate. It is the third step in the universal histidine degradation pathway. In Christiangramia forsetii (strain DSM 17595 / CGMCC 1.15422 / KT0803) (Gramella forsetii), this protein is Imidazolonepropionase.